The sequence spans 301 residues: Helicase VP6-A (301 aa).

2 disordered regions span residues 1–99 and 163–208; these read MIDW…TTGT and RRKE…TSVG. Basic and acidic residues-rich tracts occupy residues 8 to 30, 37 to 55, and 67 to 81; these read ESGKGDKVEPKEENEAEESKDGE, GQKKESSKEAEDADVDRRV, and GFRERANENVDRGDG. K82 contacts ATP. 2 stretches are compositionally biased toward basic and acidic residues: residues 163–177 and 186–202; these read RRKEKSETHARVAEK and VHGDAQKESTEDEKTPE.

Belongs to the orbivirus VP6 family. Homohexamer.

The protein localises to the virion. The enzyme catalyses ATP + H2O = ADP + phosphate + H(+). In terms of biological role, ATP dependent RNA helicase essential for RNA packaging and viral transcription. Possesses ss- and dsRNA-binding capacity. This Bluetongue virus 2 (isolate USA) (BTV 2) protein is Helicase VP6-A (Segment-9).